Reading from the N-terminus, the 984-residue chain is Calsyntenin-1 (984 aa).

The first 18 residues, M1 to A18, serve as a signal peptide directing secretion. The Extracellular segment spans residues K19–A850. Cadherin domains lie at Y66–I142 and E143–V257. 2 N-linked (GlcNAc...) asparagine glycosylation sites follow: N206 and N305. A helical membrane pass occupies residues V851 to L871. Over K872–V984 the chain is Cytoplasmic. The tract at residues M878–A959 is disordered. A compositionally biased stretch (basic and acidic residues) spans R886–D896. The segment covering E918–T951 has biased composition (acidic residues).

Belongs to the calsyntenin family. As to quaternary structure, interacts with isoform c of daf-2 (daf-2c); promoting daf-2c localization to synaptic regions. Interacts with klc-2. Interacts with unc-104. A proportion of the protein is proteolytically cleaved before the transmembrane domain in neurons, leading to release in the extracellular space. As to expression, widely expressed in the nervous system. Highly expressed in many head neurons, including most amphid sensory neurons. Also expressed in other tissues, such as intestine and gonadal sheath cells.

The protein localises to the golgi apparatus membrane. The protein resides in the perikaryon. Its subcellular location is the cell projection. It localises to the axon. It is found in the secreted. The protein localises to the synaptic cleft. Cell adhesion molecule involved in associative learning and memory. Acts as a regulator of GABAergic synaptic transmission at neuromuscular junctions by regulating GABA synaptic vesicle precursor transport: possibly functions as a cargo adapter for unc-104-mediated transport of synaptic vesicle precursors. Promotes localization of isoform c of daf-2 (daf-2c) to synaptic regions by acting as a signaling adapter between klc-2 and daf-2c. Functionally, acts as aregulator of glutamate signaling in the sensory neurons by inhibiting the activity of command interneurons, thereby negatively regulating motor circuit activity and locomotion. The chain is Calsyntenin-1 from Caenorhabditis elegans.